A 124-amino-acid chain; its full sequence is MGAANKKQELRLKRKARIRKKIAGTPERPRLSIFRSARHIYAQLIDDTKGVTFVTASSNEPDVKNNTELSGKNKSEVAVFVGKLIAGRAKDKGISSVVFDRGGFVYHGRVKAVSDGAREGGLNF.

It belongs to the universal ribosomal protein uL18 family. Part of the 50S ribosomal subunit; part of the 5S rRNA/L5/L18/L25 subcomplex. Contacts the 5S and 23S rRNAs.

Its function is as follows. This is one of the proteins that bind and probably mediate the attachment of the 5S RNA into the large ribosomal subunit, where it forms part of the central protuberance. This chain is Large ribosomal subunit protein uL18, found in Desulfosudis oleivorans (strain DSM 6200 / JCM 39069 / Hxd3) (Desulfococcus oleovorans).